Reading from the N-terminus, the 375-residue chain is MAKRDYYEVLGVERGAGEAELKKAYRRLAMKYHPDRNPDDKSAEEKFKEVNEAYEVLSDAGKRMAYDQYGHAGVDQSMGGGAGFGAGGANFSDIFGDVFSDFFGAGRAGARGGPQRGSDLRYTLELNLEEAVRGTTVTIRVPTLVHCKTCDGSGAKKGTTPVTCTTCGGIGQVRMQQGFFSVQQTCPRCHGSGKMIADPCPDCHGQGRVEEHKTLSVKVPAGVDSGDRIRLAGEGEAGTLGGPPGDLYVVVSVREHPIFQRDGKHLYCEVPISFADAALGGELEVPTLDGRVKLKIPEGTQTGKLFRLRGKGVAPVRGGAAGDLMCRVVVETPVNLSKRQRELLEEFRGSLQGNSSHSPKASGWFEGMKRFFDDL.

Positions 5 to 70 (DYYEVLGVER…GKRMAYDQYG (66 aa)) constitute a J domain. Residues 134-212 (GTTVTIRVPT…CHGQGRVEEH (79 aa)) form a CR-type zinc finger. Zn(2+) is bound by residues C147, C150, C164, C167, C186, C189, C200, and C203. CXXCXGXG motif repeat units lie at residues 147–154 (CKTCDGSG), 164–171 (CTTCGGIG), 186–193 (CPRCHGSG), and 200–207 (CPDCHGQG).

It belongs to the DnaJ family. As to quaternary structure, homodimer. The cofactor is Zn(2+).

The protein resides in the cytoplasm. Functionally, participates actively in the response to hyperosmotic and heat shock by preventing the aggregation of stress-denatured proteins and by disaggregating proteins, also in an autonomous, DnaK-independent fashion. Unfolded proteins bind initially to DnaJ; upon interaction with the DnaJ-bound protein, DnaK hydrolyzes its bound ATP, resulting in the formation of a stable complex. GrpE releases ADP from DnaK; ATP binding to DnaK triggers the release of the substrate protein, thus completing the reaction cycle. Several rounds of ATP-dependent interactions between DnaJ, DnaK and GrpE are required for fully efficient folding. Also involved, together with DnaK and GrpE, in the DNA replication of plasmids through activation of initiation proteins. The sequence is that of Chaperone protein DnaJ from Azotobacter vinelandii (strain DJ / ATCC BAA-1303).